The primary structure comprises 657 residues: Histidine ammonia-lyase (657 aa).

The 5-imidazolinone (Ala-Gly) cross-link spans 253-255; it reads ASG. Ser-254 bears the 2,3-didehydroalanine (Ser) mark. Thr-396 is subject to Phosphothreonine. Ser-635 bears the Phosphoserine mark. The residue at position 637 (Thr-637) is a Phosphothreonine. Phosphoserine is present on Ser-648.

The protein belongs to the PAL/histidase family. Post-translationally, contains an active site 4-methylidene-imidazol-5-one (MIO), which is formed autocatalytically by cyclization and dehydration of residues Ala-Ser-Gly.

The catalysed reaction is L-histidine = trans-urocanate + NH4(+). It functions in the pathway amino-acid degradation; L-histidine degradation into L-glutamate; N-formimidoyl-L-glutamate from L-histidine: step 1/3. In Bos taurus (Bovine), this protein is Histidine ammonia-lyase (HAL).